The following is a 231-amino-acid chain: Flagellar L-ring protein (231 aa).

Residues 1 to 18 form the signal peptide; it reads MNRLLSVFALGGAVLLAG. Cys-19 is lipidated: N-palmitoyl cysteine. Cys-19 carries S-diacylglycerol cysteine lipidation.

It belongs to the FlgH family. As to quaternary structure, the basal body constitutes a major portion of the flagellar organelle and consists of four rings (L,P,S, and M) mounted on a central rod.

The protein resides in the cell outer membrane. It is found in the bacterial flagellum basal body. Functionally, assembles around the rod to form the L-ring and probably protects the motor/basal body from shearing forces during rotation. This chain is Flagellar L-ring protein, found in Pseudomonas putida (strain ATCC 700007 / DSM 6899 / JCM 31910 / BCRC 17059 / LMG 24140 / F1).